The sequence spans 744 residues: Potassium-transporting ATPase ATP-binding subunit (744 aa).

A run of 4 helical transmembrane segments spans residues 80–100 (PVMF…VMAL), 108–128 (AGFI…ANVA), 265–285 (LALT…TVTL), and 310–330 (VLVA…LSAI). The active-site 4-aspartylphosphate intermediate is the D363. ATP-binding positions include D400, E404, 435 to 442 (FSAQTRMS), and K457. Mg(2+)-binding residues include D580 and D584. Helical transmembrane passes span 650-670 (FAII…LNVM), 678-698 (AVMS…PLAL), and 724-744 (LLLP…MGWV).

The protein belongs to the cation transport ATPase (P-type) (TC 3.A.3) family. Type IA subfamily. In terms of assembly, the system is composed of three essential subunits: KdpA, KdpB and KdpC.

It localises to the cell inner membrane. The enzyme catalyses K(+)(out) + ATP + H2O = K(+)(in) + ADP + phosphate + H(+). In terms of biological role, part of the high-affinity ATP-driven potassium transport (or Kdp) system, which catalyzes the hydrolysis of ATP coupled with the electrogenic transport of potassium into the cytoplasm. This subunit is responsible for energy coupling to the transport system and for the release of the potassium ions to the cytoplasm. This Ralstonia nicotianae (strain ATCC BAA-1114 / GMI1000) (Ralstonia solanacearum) protein is Potassium-transporting ATPase ATP-binding subunit.